The sequence spans 213 residues: MRPDIADLRKSYEQGELDEAHSAADPLQQFEQWLDQALKAKLPEPNAMTLATVGADGRPSTRVVLIKGCDARGIVWYTNYESRKGRELAAHPFAALQFHWVDLERVVRIEGRVEKVSDTESDAYYRSRPLDSRLGAWASPQSQVIASRAVLVANAAKVGAQFLLNPPRPPHWGGFRLRPDRWEFWQGRKSRLHDRLRYTQQPTGGWLRERLAP.

Substrate is bound by residues 9–12 (RKSY) and Lys-67. FMN contacts are provided by residues 62-67 (RVVLIK), 77-78 (YT), Arg-83, and Lys-84. The substrate site is built by Tyr-124, Arg-128, and Ser-132. Residues 141–142 (QS) and Trp-185 each bind FMN. Position 191-193 (191-193 (RLH)) interacts with substrate. Arg-195 serves as a coordination point for FMN.

Belongs to the pyridoxamine 5'-phosphate oxidase family. As to quaternary structure, homodimer. Requires FMN as cofactor.

It carries out the reaction pyridoxamine 5'-phosphate + O2 + H2O = pyridoxal 5'-phosphate + H2O2 + NH4(+). It catalyses the reaction pyridoxine 5'-phosphate + O2 = pyridoxal 5'-phosphate + H2O2. Its pathway is cofactor metabolism; pyridoxal 5'-phosphate salvage; pyridoxal 5'-phosphate from pyridoxamine 5'-phosphate: step 1/1. It functions in the pathway cofactor metabolism; pyridoxal 5'-phosphate salvage; pyridoxal 5'-phosphate from pyridoxine 5'-phosphate: step 1/1. Functionally, catalyzes the oxidation of either pyridoxine 5'-phosphate (PNP) or pyridoxamine 5'-phosphate (PMP) into pyridoxal 5'-phosphate (PLP). This is Pyridoxine/pyridoxamine 5'-phosphate oxidase from Methylibium petroleiphilum (strain ATCC BAA-1232 / LMG 22953 / PM1).